Here is a 437-residue protein sequence, read N- to C-terminus: Phosphomethylpyrimidine synthase (437 aa).

Substrate-binding positions include asparagine 69, methionine 98, tyrosine 127, histidine 163, serine 185–glycine 187, aspartate 226–arginine 229, and glutamate 265. Zn(2+) is bound at residue histidine 269. Tyrosine 292 contacts substrate. Histidine 333 is a binding site for Zn(2+). [4Fe-4S] cluster is bound by residues cysteine 409, cysteine 412, and cysteine 416.

Belongs to the ThiC family. The cofactor is [4Fe-4S] cluster.

It carries out the reaction 5-amino-1-(5-phospho-beta-D-ribosyl)imidazole + S-adenosyl-L-methionine = 4-amino-2-methyl-5-(phosphooxymethyl)pyrimidine + CO + 5'-deoxyadenosine + formate + L-methionine + 3 H(+). It functions in the pathway cofactor biosynthesis; thiamine diphosphate biosynthesis. Catalyzes the synthesis of the hydroxymethylpyrimidine phosphate (HMP-P) moiety of thiamine from aminoimidazole ribotide (AIR) in a radical S-adenosyl-L-methionine (SAM)-dependent reaction. This chain is Phosphomethylpyrimidine synthase, found in Alkaliphilus oremlandii (strain OhILAs) (Clostridium oremlandii (strain OhILAs)).